The primary structure comprises 607 residues: MNKEERAKRQSKIRNFSIIAHIDHGKSTLADRILEKTNALTQREMKAQLLDSMDLERERGITIKLNAVQLNYKAKDGEEYILHLIDTPGHVDFTYEVSRSLAACEGAILVVDAAQGIEAQTLANVYLALDNNLEILPVINKIDLPSADPERVRQEVEDVIGLDASEAVLASAKAGIGIEEILEQIVEKVPAPAGDSEEPLQCMIFDSLYDPYRGVIAYIRVVNGTVKVGDKVRMMATGKEFEVTEVGVFTPKTTQRDELTVGDVGFLAASIKNVGDTRVGDTITHAKRPAAEPLAGYRKLNPMVFCGLYPIDSARYNDLRDALEKLELNDSALEFEPETSQALGFGFRCGFLGLLHMEIIQERIEREFKIDLITTAPSVIYKVYLTNGEDVIVDNPSNMPDPQSIDRVEEPFVKASIMVPNDYVGAVMEICQGKRGTFIDMQYLDETRVTLTYEIPLSEIVYDFFDQLKSNTKGYASFDYELIGYKPSKLVKMDILLNNEQVDALSFIVHRDSAYDRGKVIVEKLKELIPRQQFEVPIQATIGNKVVARSTIKAMRKNVLAKCYGGDISRKRKLLDKQKESKKRMKSVGSVEVPQEAFMAVLKMDDN.

In terms of domain architecture, tr-type G spans 11 to 193; the sequence is SKIRNFSIIA…QIVEKVPAPA (183 aa). GTP is bound by residues 23-28 and 140-143; these read DHGKST and NKID.

This sequence belongs to the TRAFAC class translation factor GTPase superfamily. Classic translation factor GTPase family. LepA subfamily.

The protein resides in the cell membrane. It catalyses the reaction GTP + H2O = GDP + phosphate + H(+). Required for accurate and efficient protein synthesis under certain stress conditions. May act as a fidelity factor of the translation reaction, by catalyzing a one-codon backward translocation of tRNAs on improperly translocated ribosomes. Back-translocation proceeds from a post-translocation (POST) complex to a pre-translocation (PRE) complex, thus giving elongation factor G a second chance to translocate the tRNAs correctly. Binds to ribosomes in a GTP-dependent manner. In Bacillus cereus (strain ATCC 14579 / DSM 31 / CCUG 7414 / JCM 2152 / NBRC 15305 / NCIMB 9373 / NCTC 2599 / NRRL B-3711), this protein is Elongation factor 4.